A 1127-amino-acid polypeptide reads, in one-letter code: E3 ubiquitin-protein ligase TRIM33 (1127 aa).

Residues Met1–Gly18 are compositionally biased toward gly residues. The tract at residues Met1–Pro118 is disordered. Positions Met1 to His147 are necessary for E3 ubiquitin-protein ligase activity and repression of SMAD4 signaling and transcriptional repression. Positions Ser19–Pro37 are enriched in low complexity. Over residues Arg52 to Asp64 the composition is skewed to gly residues. Over residues Gly65–Pro97 the composition is skewed to low complexity. Over residues Ala98–Pro118 the composition is skewed to pro residues. The RING-type zinc finger occupies Cys125–Leu154. B box-type zinc fingers lie at residues Lys212–Lys259 and Gln271–Leu312. Residues Cys217, Cys220, Cys241, His245, Cys276, His279, Cys299, and His304 each coordinate Zn(2+). The tract at residues Cys299 to Asp401 is necessary for oligomerization. The stretch at Cys299–Asp401 forms a coiled coil. Residues Lys329, Lys334, Lys481, and Lys504 each participate in a glycyl lysine isopeptide (Lys-Gly) (interchain with G-Cter in SUMO2) cross-link. An Asymmetric dimethylarginine; alternate modification is found at Arg515. Position 515 is an omega-N-methylarginine; alternate (Arg515). A Glycyl lysine isopeptide (Lys-Gly) (interchain with G-Cter in SUMO2) cross-link involves residue Lys527. Residue Arg535 is modified to Omega-N-methylarginine. The tract at residues Met536–Gln563 is disordered. Residue Arg577 is modified to Asymmetric dimethylarginine. Arg591 carries the post-translational modification Asymmetric dimethylarginine; alternate. Position 591 is an omega-N-methylarginine; alternate (Arg591). Asymmetric dimethylarginine occurs at positions 598 and 604. 3 disordered regions span residues Pro608–Pro629, Asn673–Gly692, and Tyr703–Leu818. Residues Pro723–Arg759 are compositionally biased toward low complexity. 2 positions are modified to N6-acetyllysine; alternate: Lys763 and Lys769. Residues Lys763 and Lys769 each participate in a glycyl lysine isopeptide (Lys-Gly) (interchain with G-Cter in SUMO2); alternate cross-link. Lys774 is covalently cross-linked (Glycyl lysine isopeptide (Lys-Gly) (interchain with G-Cter in SUMO2)). Glycyl lysine isopeptide (Lys-Gly) (interchain with G-Cter in SUMO2); alternate cross-links involve residues Lys776 and Lys793. Residues Lys776 and Lys793 each participate in a glycyl lysine isopeptide (Lys-Gly) (interchain with G-Cter in SUMO1); alternate cross-link. Lys793 bears the N6-acetyllysine; alternate mark. A compositionally biased stretch (basic and acidic residues) spans Lys793–Arg802. Residue Lys796 forms a Glycyl lysine isopeptide (Lys-Gly) (interchain with G-Cter in SUMO2) linkage. Ser803 carries the post-translational modification Phosphoserine. The segment covering Leu807 to Leu818 has biased composition (low complexity). Residue Thr815 is modified to Phosphothreonine. Residue Lys861 forms a Glycyl lysine isopeptide (Lys-Gly) (interchain with G-Cter in SUMO2) linkage. Ser862 bears the Phosphoserine mark. The PHD-type zinc-finger motif lies at Glu887–Ile934. Lys951 carries the N6-acetyllysine modification. Lys953 carries the N6-acetyllysine; alternate modification. Lys953 participates in a covalent cross-link: Glycyl lysine isopeptide (Lys-Gly) (interchain with G-Cter in SUMO2); alternate. Positions Gly957–Ile1080 constitute a Bromo domain. Residues Lys1007 and Lys1043 each participate in a glycyl lysine isopeptide (Lys-Gly) (interchain with G-Cter in SUMO2) cross-link. At Thr1051 the chain carries Phosphothreonine. Lys1057 is covalently cross-linked (Glycyl lysine isopeptide (Lys-Gly) (interchain with G-Cter in SUMO2)). The disordered stretch occupies residues Pro1088 to Lys1127. Residues Phe1092–Phe1109 are compositionally biased toward acidic residues. A Phosphothreonine modification is found at Thr1102. Ser1105 carries the phosphoserine modification. Lys1118 is covalently cross-linked (Glycyl lysine isopeptide (Lys-Gly) (interchain with G-Cter in SUMO2)). The segment covering Lys1118–Lys1127 has biased composition (basic and acidic residues). Ser1119 carries the post-translational modification Phosphoserine.

The protein belongs to the TRIM/RBCC family. As to quaternary structure, homooligomer and heterooligomer with TRIM24 and TRIM28 family members. Interacts with SMAD4 in unstimulated cells. Found in a complex with SMAD2 and SMAD3 upon addition of TGF-beta. Interacts with SMAD2 and SMAD3. Interacts with SMAD4 under basal and induced conditions and, upon TGF-beta signaling, with activated SMAD2. Forms a ternary complex with SMAD4 and SMAD2 upon TGF-beta signaling. Sumoylated with SUMO1. In terms of tissue distribution, expressed in stem cells at the bottom of the crypts of the colon (at protein level). Expressed in colon adenomas and adenocarcinomas (at protein level). Expressed in brain, lung, liver, spleen, thymus, prostate, kidney, testis, heart, placenta, pancreas, small intestine, ovary, colon, skeletal muscle and hematopoietic progenitors.

The protein resides in the nucleus. The enzyme catalyses S-ubiquitinyl-[E2 ubiquitin-conjugating enzyme]-L-cysteine + [acceptor protein]-L-lysine = [E2 ubiquitin-conjugating enzyme]-L-cysteine + N(6)-ubiquitinyl-[acceptor protein]-L-lysine.. It participates in protein modification; protein ubiquitination. Acts as an E3 ubiquitin-protein ligase. Promotes SMAD4 ubiquitination, nuclear exclusion and degradation via the ubiquitin proteasome pathway. According to PubMed:16751102, does not promote a decrease in the level of endogenous SMAD4. May act as a transcriptional repressor. Inhibits the transcriptional response to TGF-beta/BMP signaling cascade. Plays a role in the control of cell proliferation. Its association with SMAD2 and SMAD3 stimulates erythroid differentiation of hematopoietic stem/progenitor. Monoubiquitinates SMAD4 and acts as an inhibitor of SMAD4-dependent TGF-beta/BMP signaling cascade (Monoubiquitination of SMAD4 hampers its ability to form a stable complex with activated SMAD2/3 resulting in inhibition of TGF-beta/BMP signaling cascade). This is E3 ubiquitin-protein ligase TRIM33 (TRIM33) from Homo sapiens (Human).